A 591-amino-acid polypeptide reads, in one-letter code: MSSKRPSTDGRRDLANGSLSSSPEEMSGAEEGRETSSGIEVEASDLSLSLTGDDGGPNRTSTESRGTDTESSGEEKDSDSMEDTGHYSINDENRVHGHSDEEEEEEQPRHRVQRKRASRDQDSSDDERALEDWVSSETTALPRPRWQALPALRERELGSSARFVYEACGARVFVQRFRLQHGLEGHTGCVNTLHFNQRGTWLASGSDDLKVVVWDWVRRQPVLDFESGHKSNVFQAKFLPNSGDSTLAMCARDGQVRVAELSATQCCKNTKRVAQHKGASHKLALEPDSPCTFLSAGEDAVVFTIDLRQDRPASKLVVTKEKEKKVGLYTIYVNPANTHQFAVGGRDQFVRIYDQRKIDENENNGVLKKFCPHHLVNSESKANITCLVYSHDGTELLASYNDEDIYLFNSSHSDGAQYIKRYKGHRNNATVKGVNFYGPKSEFVVSGSDCGHIFLWEKSSCQIIQFMEGDKGGVVNCLEPHPHLPVLATSGLDHDVKIWAPTAEASTELTGLKDVIKKNKRERDEDSLHHTDLFDSHMLWFLMHHLRQRRHHRRWREPGVGATDADSDESPSSSDTSDEEEGPDRVQCMPS.

Over residues 1-14 the composition is skewed to basic and acidic residues; the sequence is MSSKRPSTDGRRDL. Positions 1-140 are disordered; it reads MSSKRPSTDG…EDWVSSETTA (140 aa). A phosphoserine mark is found at Ser-21 and Ser-22. Positions 39–50 match the Nuclear export signal motif; sequence IEVEASDLSLSL. 2 stretches are compositionally biased toward basic and acidic residues: residues 65 to 99 and 118 to 131; these read RGTD…HGHS and SRDQ…RALE. Ser-99, Ser-123, and Ser-124 each carry phosphoserine. WD repeat units lie at residues 185 to 224, 228 to 269, 275 to 315, 323 to 363, 379 to 418, 426 to 466, and 470 to 509; these read GHTG…PVLD, GHKS…CCKN, QHKG…PASK, EKKV…ENEN, ESKA…GAQY, RNNA…IIQF, and DKGG…STEL. An Omega-N-methylarginine; by PRMT1 modification is found at Arg-198. Positions 552–591 are disordered; sequence HRRWREPGVGATDADSDESPSSSDTSDEEEGPDRVQCMPS.

The protein belongs to the WD repeat DCAF8 family. Interacts with DDB1, CUL4A and CUL4B. Interacts with KPNA1, KPNB1 and XPO1.

It is found in the nucleus. The protein localises to the cytoplasm. It functions in the pathway protein modification; protein ubiquitination. Functionally, may function as a substrate receptor for CUL4-DDB1 E3 ubiquitin-protein ligase complex. This chain is DDB1- and CUL4-associated factor 8 (Dcaf8), found in Rattus norvegicus (Rat).